We begin with the raw amino-acid sequence, 248 residues long: MADS-box transcription factor 8 (248 aa).

The region spanning 1-61 is the MADS-box domain; it reads MGRGRVELKR…GKLYEFCSGQ (61 aa). One can recognise a K-box domain in the interval 90–180; the sequence is VQSSRNEYLK…RRKLEESNQL (91 aa).

As to quaternary structure, may interact with the K-box of MADS6 and MADS16. May interact with MADS13 and MADS18. Binds to FCA. Expressed in lodicules, stamens and carpels.

It is found in the nucleus. Functionally, probable transcription factor. May be involved in the control of flowering time. This is MADS-box transcription factor 8 (MADS8) from Oryza sativa subsp. japonica (Rice).